Reading from the N-terminus, the 505-residue chain is Probable RNA exonuclease NGL3 (505 aa).

Disordered regions lie at residues 1 to 75 (MDSQ…FPTP) and 334 to 369 (RNGE…SFTA). A compositionally biased stretch (polar residues) spans 10–23 (SPSQKESSSTSGLV). Positions 36–54 (HRDQLSVDQIKKIREERAQ) are enriched in basic and acidic residues. Residue S62 is modified to Phosphoserine. The segment covering 338–347 (ESDQDDEECD) has biased composition (acidic residues).

Belongs to the CCR4/nocturin family.

In Saccharomyces cerevisiae (strain ATCC 204508 / S288c) (Baker's yeast), this protein is Probable RNA exonuclease NGL3 (NGL3).